The following is a 258-amino-acid chain: Imidazole glycerol phosphate synthase subunit HisF (258 aa).

Residues Asp11 and Asp130 contribute to the active site.

This sequence belongs to the HisA/HisF family. In terms of assembly, heterodimer of HisH and HisF.

It is found in the cytoplasm. The catalysed reaction is 5-[(5-phospho-1-deoxy-D-ribulos-1-ylimino)methylamino]-1-(5-phospho-beta-D-ribosyl)imidazole-4-carboxamide + L-glutamine = D-erythro-1-(imidazol-4-yl)glycerol 3-phosphate + 5-amino-1-(5-phospho-beta-D-ribosyl)imidazole-4-carboxamide + L-glutamate + H(+). It participates in amino-acid biosynthesis; L-histidine biosynthesis; L-histidine from 5-phospho-alpha-D-ribose 1-diphosphate: step 5/9. Its function is as follows. IGPS catalyzes the conversion of PRFAR and glutamine to IGP, AICAR and glutamate. The HisF subunit catalyzes the cyclization activity that produces IGP and AICAR from PRFAR using the ammonia provided by the HisH subunit. The protein is Imidazole glycerol phosphate synthase subunit HisF of Edwardsiella ictaluri (strain 93-146).